The following is a 244-amino-acid chain: Glutathione S-transferase theta-2 (244 aa).

The region spanning 2–82 (GLELYLDLLS…YLSSKYQVAD (81 aa)) is the GST N-terminal domain. Glutathione-binding positions include 40 to 41 (HM), 53 to 54 (KV), 66 to 67 (ES), and 104 to 107 (DNIR). One can recognise a GST C-terminal domain in the interval 88–230 (DLQARAQVHE…AKKMLPVPPP (143 aa)).

It belongs to the GST superfamily. Theta family. In terms of assembly, homodimer. In liver, highest expression found in central vein limiting plate hepatocytes. Also expressed in interlobular bile duct epithelial cells. In lung, expressed in club cells and ciliated cells of the bronchiolar epithelium and in type II alveolar cells of the lung parenchyma.

It is found in the cytoplasm. The protein localises to the cytosol. Its subcellular location is the nucleus. The catalysed reaction is RX + glutathione = an S-substituted glutathione + a halide anion + H(+). In terms of biological role, conjugation of reduced glutathione to a wide number of exogenous and endogenous hydrophobic electrophiles. In Mus musculus (Mouse), this protein is Glutathione S-transferase theta-2.